A 259-amino-acid polypeptide reads, in one-letter code: Indole-3-glycerol phosphate synthase (259 aa).

It belongs to the TrpC family.

It carries out the reaction 1-(2-carboxyphenylamino)-1-deoxy-D-ribulose 5-phosphate + H(+) = (1S,2R)-1-C-(indol-3-yl)glycerol 3-phosphate + CO2 + H2O. It functions in the pathway amino-acid biosynthesis; L-tryptophan biosynthesis; L-tryptophan from chorismate: step 4/5. The chain is Indole-3-glycerol phosphate synthase from Rhodopirellula baltica (strain DSM 10527 / NCIMB 13988 / SH1).